The primary structure comprises 343 residues: UBP1-associated proteins 1A (343 aa).

The tract at residues 1–61 (MAKTLDKSKK…SESDNEFDPE (61 aa)) is disordered. A compositionally biased stretch (low complexity) spans 28–49 (NKQQQQPESSTPYSSSSSSSDS). Residues 50–61 (SDSESDNEFDPE) show a composition bias toward acidic residues. Residues 104-181 (RKIFVYGLPW…RTATCQLASM (78 aa)) form the RRM domain. The segment at 312-343 (STYPDSDAGGKRGTGKDSDAGGSSFHGYSNYS) is disordered. Over residues 319 to 330 (AGGKRGTGKDSD) the composition is skewed to basic and acidic residues.

In terms of assembly, interacts with UBA1A, UBA2A, UBP1A, UBP1B and UBP1C.

The protein localises to the nucleus. Acts as a component of a complex regulating the turnover of mRNAs in the nucleus. Binds with high affinity to RNA molecules that contain U-rich sequences in 3'-UTRs. May function in complex with UBP1 and contribute to the stabilization of mRNAs in the nucleus. However, unlike UBP1, UBA1A does not stimulate pre-mRNA splicing. The sequence is that of UBP1-associated proteins 1A (UBA1A) from Arabidopsis thaliana (Mouse-ear cress).